Reading from the N-terminus, the 63-residue chain is Large ribosomal subunit protein uL29 (63 aa).

Belongs to the universal ribosomal protein uL29 family.

The polypeptide is Large ribosomal subunit protein uL29 (Glaesserella parasuis serovar 5 (strain SH0165) (Haemophilus parasuis)).